The sequence spans 171 residues: Thioredoxin-2 (171 aa).

Residues 41–169 (AFNASPSTSQ…LQALISANHP (129 aa)) form the Thioredoxin domain. Cysteine 95 and cysteine 98 are disulfide-bonded.

Belongs to the thioredoxin family.

The protein localises to the cytoplasm. The protein resides in the vacuole. Its function is as follows. Thioredoxin involved in responses to oxidative and cell wall stresses. Plays an important role in appressorium formation on hyphal tips. TRX2 may affect invasive growth via the MST11-MST7-PMK1 pathway since it is required for the proper folding or dimerization of MAPKK MST7. The polypeptide is Thioredoxin-2 (Pyricularia oryzae (strain 70-15 / ATCC MYA-4617 / FGSC 8958) (Rice blast fungus)).